The primary structure comprises 62 residues: MRCVPVFIILLLLSPSAPSVDAHPMTKDDVPQASLHDDAKRTLQVPWMKRGCCAMLTCCVGR.

The first 22 residues, 1 to 22 (MRCVPVFIILLLLSPSAPSVDA), serve as a signal peptide directing secretion. Positions 23–48 (HPMTKDDVPQASLHDDAKRTLQVPWM) are excised as a propeptide. Position 60 is a valine amide (valine 60).

Belongs to the conotoxin T superfamily. Post-translationally, contains 2 disulfide bonds that can be either 'C1-C3, C2-C4' or 'C1-C4, C2-C3', since these disulfide connectivities have been observed for conotoxins with cysteine framework V (for examples, see AC P0DQQ7 and AC P81755). Expressed by the venom duct.

It localises to the secreted. The protein is Conotoxin Qc5.2 of Conus quercinus (Oak cone).